The primary structure comprises 463 residues: Asparagine--tRNA ligase (463 aa).

Belongs to the class-II aminoacyl-tRNA synthetase family. As to quaternary structure, homodimer.

Its subcellular location is the cytoplasm. It carries out the reaction tRNA(Asn) + L-asparagine + ATP = L-asparaginyl-tRNA(Asn) + AMP + diphosphate + H(+). This Bacillus cereus (strain ATCC 10987 / NRS 248) protein is Asparagine--tRNA ligase.